The primary structure comprises 131 residues: Fumarate reductase subunit C (131 aa).

Transmembrane regions (helical) follow at residues 30–50 (EGTCLPQLWFSLVVLFGVFAL), 58–78 (AGFVGFLSNPILMLINIVTLI), and 109–129 (IVRGLWGLTIVVTVVILAVAL).

Belongs to the FrdC family. In terms of assembly, part of an enzyme complex containing four subunits: a flavoprotein (FrdA), an iron-sulfur protein (FrdB), and two hydrophobic anchor proteins (FrdC and FrdD).

The protein resides in the cell inner membrane. In terms of biological role, two distinct, membrane-bound, FAD-containing enzymes are responsible for the catalysis of fumarate and succinate interconversion; fumarate reductase is used in anaerobic growth, and succinate dehydrogenase is used in aerobic growth. Anchors the catalytic components of the fumarate reductase complex to the cell inner membrane, binds quinones. This is Fumarate reductase subunit C from Proteus vulgaris.